Consider the following 327-residue polypeptide: 2-oxoisovalerate dehydrogenase subunit beta (327 aa).

Thiamine diphosphate contacts are provided by residues Glu-29, 58–60 (LAE), Gln-82, and 86–89 (FIMP). Substrate contacts are provided by residues 83-86 (FADF) and His-129. The active-site Proton acceptor is His-129.

As to quaternary structure, heterotetramer of two alpha and two beta chains. Directly associated with ODBA in the E1 complex. It depends on thiamine diphosphate as a cofactor.

It catalyses the reaction N(6)-[(R)-lipoyl]-L-lysyl-[protein] + 3-methyl-2-oxobutanoate + H(+) = N(6)-[(R)-S(8)-2-methylpropanoyldihydrolipoyl]-L-lysyl-[protein] + CO2. Functionally, the branched-chain alpha-keto dehydrogenase complex catalyzes the overall conversion of alpha-keto acids to acyl-CoA and CO(2). It contains multiple copies of three enzymatic components: branched-chain alpha-keto acid decarboxylase (E1), lipoamide acyltransferase (E2) and lipoamide dehydrogenase (E3). The chain is 2-oxoisovalerate dehydrogenase subunit beta (bfmBAB) from Bacillus subtilis (strain 168).